The chain runs to 220 residues: Pyridoxine/pyridoxamine 5'-phosphate oxidase (220 aa).

FMN is bound by residues 49 to 54 (RMVLLK), 68 to 69 (YT), K75, and Q97. A substrate-binding site is contributed by K54. Substrate contacts are provided by Y115, R119, and S123. FMN-binding positions include 132–133 (QS) and W176. Residue 182 to 184 (RLH) coordinates substrate. R186 lines the FMN pocket.

It belongs to the pyridoxamine 5'-phosphate oxidase family. In terms of assembly, homodimer. Requires FMN as cofactor.

It carries out the reaction pyridoxamine 5'-phosphate + O2 + H2O = pyridoxal 5'-phosphate + H2O2 + NH4(+). The catalysed reaction is pyridoxine 5'-phosphate + O2 = pyridoxal 5'-phosphate + H2O2. It functions in the pathway cofactor metabolism; pyridoxal 5'-phosphate salvage; pyridoxal 5'-phosphate from pyridoxamine 5'-phosphate: step 1/1. Its pathway is cofactor metabolism; pyridoxal 5'-phosphate salvage; pyridoxal 5'-phosphate from pyridoxine 5'-phosphate: step 1/1. Catalyzes the oxidation of either pyridoxine 5'-phosphate (PNP) or pyridoxamine 5'-phosphate (PMP) into pyridoxal 5'-phosphate (PLP). This Paracoccus denitrificans (strain Pd 1222) protein is Pyridoxine/pyridoxamine 5'-phosphate oxidase.